The primary structure comprises 295 residues: Ribosomal RNA small subunit methyltransferase A (295 aa).

Residues asparagine 29, leucine 31, glycine 56, glutamate 77, aspartate 102, and asparagine 128 each coordinate S-adenosyl-L-methionine.

This sequence belongs to the class I-like SAM-binding methyltransferase superfamily. rRNA adenine N(6)-methyltransferase family. RsmA subfamily.

Its subcellular location is the cytoplasm. The enzyme catalyses adenosine(1518)/adenosine(1519) in 16S rRNA + 4 S-adenosyl-L-methionine = N(6)-dimethyladenosine(1518)/N(6)-dimethyladenosine(1519) in 16S rRNA + 4 S-adenosyl-L-homocysteine + 4 H(+). Functionally, specifically dimethylates two adjacent adenosines (A1518 and A1519) in the loop of a conserved hairpin near the 3'-end of 16S rRNA in the 30S particle. May play a critical role in biogenesis of 30S subunits. The sequence is that of Ribosomal RNA small subunit methyltransferase A from Listeria monocytogenes serotype 4b (strain CLIP80459).